The sequence spans 232 residues: tRNA (guanine-N(7)-)-methyltransferase (232 aa).

E38, D63, E90, and D113 together coordinate S-adenosyl-L-methionine. The active site involves D113. Residues K117 and D149 each coordinate substrate.

Belongs to the class I-like SAM-binding methyltransferase superfamily. TrmB family.

It catalyses the reaction guanosine(46) in tRNA + S-adenosyl-L-methionine = N(7)-methylguanosine(46) in tRNA + S-adenosyl-L-homocysteine. It functions in the pathway tRNA modification; N(7)-methylguanine-tRNA biosynthesis. Functionally, catalyzes the formation of N(7)-methylguanine at position 46 (m7G46) in tRNA. This chain is tRNA (guanine-N(7)-)-methyltransferase, found in Syntrophotalea carbinolica (strain DSM 2380 / NBRC 103641 / GraBd1) (Pelobacter carbinolicus).